The primary structure comprises 445 residues: Ribosomal protein uS12 methylthiotransferase RimO (445 aa).

The region spanning 4-119 is the MTTase N-terminal domain; that stretch reads IKVALVSLGC…LLESIKVFLK (116 aa). The [4Fe-4S] cluster site is built by Cys-13, Cys-48, Cys-82, Cys-156, Cys-160, and Cys-163. In terms of domain architecture, Radical SAM core spans 142 to 372; that stretch reads TTPTYTAYVR…MILQQSISKD (231 aa). The region spanning 375-441 is the TRAM domain; it reads KEKIGKIYEV…EYDLIGVVYN (67 aa).

It belongs to the methylthiotransferase family. RimO subfamily. The cofactor is [4Fe-4S] cluster.

It localises to the cytoplasm. The catalysed reaction is L-aspartate(89)-[ribosomal protein uS12]-hydrogen + (sulfur carrier)-SH + AH2 + 2 S-adenosyl-L-methionine = 3-methylsulfanyl-L-aspartate(89)-[ribosomal protein uS12]-hydrogen + (sulfur carrier)-H + 5'-deoxyadenosine + L-methionine + A + S-adenosyl-L-homocysteine + 2 H(+). In terms of biological role, catalyzes the methylthiolation of an aspartic acid residue of ribosomal protein uS12. The protein is Ribosomal protein uS12 methylthiotransferase RimO of Clostridium botulinum (strain Langeland / NCTC 10281 / Type F).